Consider the following 189-residue polypeptide: Pyridoxal 5'-phosphate synthase subunit PdxT (189 aa).

46-48 (GES) is a binding site for L-glutamine. The active-site Nucleophile is Cys78. L-glutamine is bound by residues Arg107 and 136-137 (IR). Catalysis depends on charge relay system residues His173 and Glu175.

The protein belongs to the glutaminase PdxT/SNO family. As to quaternary structure, in the presence of PdxS, forms a dodecamer of heterodimers. Only shows activity in the heterodimer.

The catalysed reaction is aldehydo-D-ribose 5-phosphate + D-glyceraldehyde 3-phosphate + L-glutamine = pyridoxal 5'-phosphate + L-glutamate + phosphate + 3 H2O + H(+). It carries out the reaction L-glutamine + H2O = L-glutamate + NH4(+). The protein operates within cofactor biosynthesis; pyridoxal 5'-phosphate biosynthesis. Functionally, catalyzes the hydrolysis of glutamine to glutamate and ammonia as part of the biosynthesis of pyridoxal 5'-phosphate. The resulting ammonia molecule is channeled to the active site of PdxS. In Roseiflexus sp. (strain RS-1), this protein is Pyridoxal 5'-phosphate synthase subunit PdxT.